The following is a 444-amino-acid chain: Elongation factor 1-alpha (444 aa).

Positions 14 to 235 (KPHLNLAIIG…ALDAIEPPPR (222 aa)) constitute a tr-type G domain. Residues 23–30 (GHVDHGKS) form a G1 region. 23–30 (GHVDHGKS) serves as a coordination point for GTP. S30 is a binding site for Mg(2+). Positions 79-83 (GVTIE) are G2. The segment at 100–103 (DLPG) is G3. Residues 100-104 (DLPGH) and 162-165 (NKMD) each bind GTP. Residues 162–165 (NKMD) are G4. The segment at 201–203 (SAV) is G5.

It belongs to the TRAFAC class translation factor GTPase superfamily. Classic translation factor GTPase family. EF-Tu/EF-1A subfamily.

Its subcellular location is the cytoplasm. It catalyses the reaction GTP + H2O = GDP + phosphate + H(+). In terms of biological role, GTP hydrolase that promotes the GTP-dependent binding of aminoacyl-tRNA to the A-site of ribosomes during protein biosynthesis. In Caldivirga maquilingensis (strain ATCC 700844 / DSM 13496 / JCM 10307 / IC-167), this protein is Elongation factor 1-alpha.